The sequence spans 437 residues: Trigger factor (437 aa).

One can recognise a PPIase FKBP-type domain in the interval 161-246 (DDQVNIDFVG…VNSVSAPVLP (86 aa)).

It belongs to the FKBP-type PPIase family. Tig subfamily.

The protein resides in the cytoplasm. The enzyme catalyses [protein]-peptidylproline (omega=180) = [protein]-peptidylproline (omega=0). In terms of biological role, involved in protein export. Acts as a chaperone by maintaining the newly synthesized protein in an open conformation. Functions as a peptidyl-prolyl cis-trans isomerase. The chain is Trigger factor from Pseudomonas putida (strain GB-1).